Reading from the N-terminus, the 104-residue chain is Large ribosomal subunit protein uL24 (104 aa).

This sequence belongs to the universal ribosomal protein uL24 family. Part of the 50S ribosomal subunit.

Its function is as follows. One of two assembly initiator proteins, it binds directly to the 5'-end of the 23S rRNA, where it nucleates assembly of the 50S subunit. In terms of biological role, one of the proteins that surrounds the polypeptide exit tunnel on the outside of the subunit. The protein is Large ribosomal subunit protein uL24 of Corynebacterium kroppenstedtii (strain DSM 44385 / JCM 11950 / CIP 105744 / CCUG 35717).